The following is a 115-amino-acid chain: ATP synthase subunit g, mitochondrial (115 aa).

The residue at position 1 (methionine 1) is an N-acetylmethionine. Serine 3 and serine 62 each carry phosphoserine.

It belongs to the ATPase g subunit family. As to quaternary structure, F-type ATPases have 2 components, CF(1) - the catalytic core - and CF(0) - the membrane proton channel. In yeast, the dimeric form of ATP synthase consists of 17 polypeptides: alpha, beta, gamma, delta, epsilon, 4 (B), 5 (OSCP), 6 (A), 8, 9 (C), d, E (Tim11), f, g, h, i/j and k. Phosphorylation on Ser-62 impairs ATP synthase dimerization.

The protein localises to the mitochondrion membrane. Its function is as follows. Mitochondrial membrane ATP synthase (F(1)F(0) ATP synthase or Complex V) produces ATP from ADP in the presence of a proton gradient across the membrane which is generated by electron transport complexes of the respiratory chain. F-type ATPases consist of two structural domains, F(1) - containing the extramembraneous catalytic core, and F(0) - containing the membrane proton channel, linked together by a central stalk and a peripheral stalk. During catalysis, ATP synthesis in the catalytic domain of F(1) is coupled via a rotary mechanism of the central stalk subunits to proton translocation. Part of the complex F(0) domain. Minor subunit located with subunit a in the membrane. This chain is ATP synthase subunit g, mitochondrial (ATP20), found in Saccharomyces cerevisiae (strain ATCC 204508 / S288c) (Baker's yeast).